The primary structure comprises 495 residues: Glycerol kinase (495 aa).

Position 11 (threonine 11) interacts with ADP. The ATP site is built by threonine 11, threonine 12, and serine 13. Threonine 11 serves as a coordination point for sn-glycerol 3-phosphate. Residue arginine 15 coordinates ADP. Sn-glycerol 3-phosphate is bound by residues arginine 81, glutamate 82, tyrosine 133, and aspartate 242. Glycerol contacts are provided by arginine 81, glutamate 82, tyrosine 133, aspartate 242, and glutamine 243. Residues threonine 264 and glycine 307 each contribute to the ADP site. 4 residues coordinate ATP: threonine 264, glycine 307, glutamine 311, and glycine 408. Residues glycine 408 and asparagine 412 each contribute to the ADP site.

The protein belongs to the FGGY kinase family.

It catalyses the reaction glycerol + ATP = sn-glycerol 3-phosphate + ADP + H(+). The protein operates within polyol metabolism; glycerol degradation via glycerol kinase pathway; sn-glycerol 3-phosphate from glycerol: step 1/1. Inhibited by fructose 1,6-bisphosphate (FBP). Its function is as follows. Key enzyme in the regulation of glycerol uptake and metabolism. Catalyzes the phosphorylation of glycerol to yield sn-glycerol 3-phosphate. This is Glycerol kinase from Rhodospirillum rubrum (strain ATCC 11170 / ATH 1.1.1 / DSM 467 / LMG 4362 / NCIMB 8255 / S1).